Consider the following 340-residue polypeptide: Erythroferrone (340 aa).

The first 24 residues, 1 to 24, serve as a signal peptide directing secretion; it reads MASTRRPVGARTLLACASLLAAMG. Disordered stretches follow at residues 30–63, 79–112, and 141–161; these read SAEP…IAHA, SDKG…GPPG, and HCTR…PAAQ. Residues 40–58 are compositionally biased toward pro residues; the sequence is PQPPGAELPAPPANSPPEP. The span at 84-95 shows a compositional bias: basic residues; it reads NSKRRSKARRLK. Residues P99, P101, P102, P104, P105, and P107 each carry the hydroxyproline modification. A compositionally biased stretch (pro residues) spans 99 to 112; that stretch reads PGPPGPPGPQGPPG. Residues 145–154 are compositionally biased toward polar residues; the sequence is DLTTPASGSP. In terms of domain architecture, C1q spans 185-340; that stretch reads APRVEAAFHC…SHFSAILLGL (156 aa). 4 N-linked (GlcNAc...) asparagine glycosylation sites follow: N229, N281, N292, and N319.

Belongs to the adipolin/erythroferrone family. In terms of assembly, homodimer; disulfide-linked. Forms trimer, hexamers and higher molecular weight oligomers. May form heteromeric complexes with C1QTNF2 and C1QTNF12 and, to a lesser extent, with C1QTNF5 and C1QTNF10. Interacts with BMP5 and BMP7; the interaction inhibits BMP-induced transcription of HAMP. Interacts with BMP6; the interaction inhibits BMP-induced transcription of HAMP. Interacts with BMP2. Interacts with heterodimers composed of BMP2 and BMP6 in vitro, the interaction inhibits the heterodimer binding to its receptor BMPR1A /ALK3 and thereby suppresses expression of HAMP. Post-translationally, N-glycosylated; required for secretion of the mature protein. In terms of tissue distribution, expressed in the soleus muscle in the leg (at protein level). Found in blood (at protein level). Weakly expressed in the heart (at protein level). Predominantly expressed in skeletal muscle and, at much lower levels, in other tissues, including lung, eye, smooth muscle, brain and kidney. Within skeletal muscles, higher expression levels in soleus as compared with plantaris. Expressed in osteoblasts, mature osteoclasts and erythroblasts. When fasting, females tend to have higher circulating levels than males. Obese mice tend to have lower expression and circulating levels as compared to lean animals. Following EPO treatment, only expressed in bone marrow and spleen.

The protein localises to the secreted. In terms of biological role, iron-regulatory hormone that acts as an erythroid regulator after hemorrhage: produced by erythroblasts following blood loss and mediates suppression of hepcidin (HAMP) expression in the liver, thereby promoting increased iron absorption and mobilization from stores. Promotes lipid uptake into adipocytes and hepatocytes via transcriptional up-regulation of genes involved in fatty acid uptake. Inhibits apoptosis and inflammatory response in cardiomyocytes via promotion of sphingosine-1-phosphate (S1P) and cAMP-dependent activation of AKT signaling. Inhibits autophagy induced by nutrient deficiency in hepatocytes via promoting the phosphorylation of IRS1, AKT, and MTOR, and thereby subsequent activation of the AKT-MTOR signaling pathway. Negatively regulates the differentiation of osteoblasts, potentially via sequestering BMP2, and thereby inhibits the activation of SMAD signaling. The reduction in BMP2 signaling in osteoblasts also results in an increase in expression of the osteoclastogenesis-promoting factors TNFSF11/RANKL and SOST, thereby indirectly promotes bone resorption. In Mus musculus (Mouse), this protein is Erythroferrone.